The primary structure comprises 322 residues: Dioxygenase himG (322 aa).

Fe cation contacts are provided by H148 and H229.

Belongs to the PhyH family. As to quaternary structure, homodimer. Fe cation is required as a cofactor.

It functions in the pathway secondary metabolite biosynthesis. Its function is as follows. Polyketide synthase-nonribosomal peptide synthetase; part of the him gene cluster that mediates the biosynthesis of himeic acid A, a ubiquitin-activating enzyme (E1) inhibitor. First, himA, together with the trans-enoyl reductase himH, catalyzes the formation of apolyketide chain, which is then condensed with leucine by the NRPS activity of himA. Dieckmann cyclization and release from himA gives a tetramic acid intermediate as the product of himA PKS-NRPS. HimG then catalyzes alpha-oxidation of the tetramic acid ring, with a subsequent rearrangement to yield apyrone intermediate. Two terminal methyl groups of polyketide and amide side chains are oxidized to carboxylic acids by himC cytochrome P450 monooxygenase to form himeic acid A. Himeic acid A is further converted to himeic acid B and C during culture growth. No gene responsible for pyrone to pyridone conversion was found in the him gene cluster and himeic acid A is non-enzymatically converted to himeic acid C by the incorporation of an ammonium nitrogen atom in a pH5 buffer, and to himeic acid B at a conversion ratio of 50% during incubation in MeOH for 5 days. The sequence is that of Dioxygenase himG from Aspergillus japonicus.